The chain runs to 561 residues: Arginine--tRNA ligase (561 aa).

Positions 128–138 (ANPTGPLHVGH) match the 'HIGH' region motif.

Belongs to the class-I aminoacyl-tRNA synthetase family. Monomer.

It localises to the cytoplasm. It catalyses the reaction tRNA(Arg) + L-arginine + ATP = L-arginyl-tRNA(Arg) + AMP + diphosphate. The chain is Arginine--tRNA ligase from Marinobacter nauticus (strain ATCC 700491 / DSM 11845 / VT8) (Marinobacter aquaeolei).